A 412-amino-acid chain; its full sequence is CCA-adding enzyme (412 aa).

ATP contacts are provided by serine 41 and lysine 44. Residues serine 41 and lysine 44 each contribute to the CTP site. The Mg(2+) site is built by aspartate 53, aspartate 55, and aspartate 106. Histidine 129, lysine 149, and tyrosine 158 together coordinate ATP. Histidine 129, lysine 149, and tyrosine 158 together coordinate CTP.

It belongs to the tRNA nucleotidyltransferase/poly(A) polymerase family. Archaeal CCA-adding enzyme subfamily. As to quaternary structure, homodimer. Forms a tetramer upon binding two tRNAs. However, tRNA-induced tetramer formation is not required for CCA addition. Mg(2+) is required as a cofactor.

It carries out the reaction a tRNA precursor + 2 CTP + ATP = a tRNA with a 3' CCA end + 3 diphosphate. The catalysed reaction is a tRNA with a 3' CCA end + 2 CTP + ATP = a tRNA with a 3' CCACCA end + 3 diphosphate. Catalyzes the addition and repair of the essential 3'-terminal CCA sequence in tRNAs without using a nucleic acid template. Adds these three nucleotides in the order of C, C, and A to the tRNA nucleotide-73, using CTP and ATP as substrates and producing inorganic pyrophosphate. tRNA 3'-terminal CCA addition is required both for tRNA processing and repair. Also involved in tRNA surveillance by mediating tandem CCA addition to generate a CCACCA at the 3' terminus of unstable tRNAs. While stable tRNAs receive only 3'-terminal CCA, unstable tRNAs are marked with CCACCA and rapidly degraded. The structural flexibility of RNA controls the choice between CCA versus CCACCA addition: following the first CCA addition cycle, nucleotide-binding to the active site triggers a clockwise screw motion, producing torque on the RNA. This ejects stable RNAs, whereas unstable RNAs are refolded while bound to the enzyme and subjected to a second CCA catalytic cycle. The chain is CCA-adding enzyme from Saccharolobus shibatae (strain ATCC 51178 / DSM 5389 / JCM 8931 / NBRC 15437 / B12) (Sulfolobus shibatae).